Reading from the N-terminus, the 276-residue chain is Exosome complex component RRP43 (276 aa).

Ala2 is modified (N-acetylalanine).

It belongs to the RNase PH family. Component of the RNA exosome core complex (Exo-9), composed of EXOSC1, EXOSC2, EXOSC3, EXOSC4, EXOSC5, EXOSC6, EXOSC7, EXOSC8 and EXOSC9; within the complex interacts with EXOSC5 and EXOSC6. The catalytically inactive RNA exosome core complex (Exo-9) associates with the catalytic subunit EXOSC10/RRP6. Exo-9 may associate with DIS3 to form the nucleolar exosome complex, or DIS3L to form the cytoplasmic exosome complex. Exo-9 is formed by a hexameric base ring consisting of the heterodimers EXOSC4-EXOSC9, EXOSC5-EXOSC8 and EXOSC6-EXOSC7, and a cap ring consisting of EXOSC1, EXOSC2 and EXOSC3. The RNA exosome complex associates with cofactors C1D/RRP47, MPHOSPH6/MPP6 and MTREX/MTR4. Binds outer membrane protein opap from Neisseria gonorrhoeae.

It localises to the cytoplasm. It is found in the nucleus. The protein resides in the nucleolus. Its function is as follows. Non-catalytic component of the RNA exosome complex which has 3'-&gt;5' exoribonuclease activity and participates in a multitude of cellular RNA processing and degradation events. In the nucleus, the RNA exosome complex is involved in proper maturation of stable RNA species such as rRNA, snRNA and snoRNA, in the elimination of RNA processing by-products and non-coding 'pervasive' transcripts, such as antisense RNA species and promoter-upstream transcripts (PROMPTs), and of mRNAs with processing defects, thereby limiting or excluding their export to the cytoplasm. The RNA exosome may be involved in Ig class switch recombination (CSR) and/or Ig variable region somatic hypermutation (SHM) by targeting AICDA deamination activity to transcribed dsDNA substrates. In the cytoplasm, the RNA exosome complex is involved in general mRNA turnover and specifically degrades inherently unstable mRNAs containing AU-rich elements (AREs) within their 3' untranslated regions, and in RNA surveillance pathways, preventing translation of aberrant mRNAs. It seems to be involved in degradation of histone mRNA. The catalytic inactive RNA exosome core complex of 9 subunits (Exo-9) is proposed to play a pivotal role in the binding and presentation of RNA for ribonucleolysis, and to serve as a scaffold for the association with catalytic subunits and accessory proteins or complexes. EXOSC8 binds to ARE-containing RNAs. The chain is Exosome complex component RRP43 (EXOSC8) from Homo sapiens (Human).